We begin with the raw amino-acid sequence, 436 residues long: 3-ketoacyl-CoA thiolase (436 aa).

The active-site Acyl-thioester intermediate is Cys99. Active-site proton acceptor residues include His392 and Cys422.

It belongs to the thiolase-like superfamily. Thiolase family. Heterotetramer of two alpha chains (FadJ) and two beta chains (FadI).

The protein resides in the cytoplasm. The enzyme catalyses an acyl-CoA + acetyl-CoA = a 3-oxoacyl-CoA + CoA. The protein operates within lipid metabolism; fatty acid beta-oxidation. Its function is as follows. Catalyzes the final step of fatty acid oxidation in which acetyl-CoA is released and the CoA ester of a fatty acid two carbons shorter is formed. The chain is 3-ketoacyl-CoA thiolase from Shewanella woodyi (strain ATCC 51908 / MS32).